A 670-amino-acid polypeptide reads, in one-letter code: Kinesin-like protein KIF2B (670 aa).

Phosphothreonine; by PLK1 is present on threonine 122. Positions 146–173 (CLQEIEKVQKQREKRRRLQQEIRARRAL) form a coiled coil. Serine 201 bears the Phosphoserine; by PLK1 mark. The Kinesin motor domain occupies 210–540 (RICVCVRKRP…LRYANRVKEL (331 aa)). 300–307 (GQTGSGKT) is an ATP binding site.

Belongs to the TRAFAC class myosin-kinesin ATPase superfamily. Kinesin family. MCAK/KIF2 subfamily. In terms of processing, phosphorylation at Thr-122 by PLK1 is required for activity in the correction of kinetochore-microtubules attachment errors, while phosphorylation at Ser-201 also by PLK1 is required for the kinetochore localization and activity in prometaphase.

It is found in the cytoplasm. It localises to the cytoskeleton. The protein resides in the microtubule organizing center. The protein localises to the centrosome. Its subcellular location is the spindle. It is found in the chromosome. It localises to the centromere. The protein resides in the kinetochore. In terms of biological role, plus end-directed microtubule-dependent motor required for spindle assembly and chromosome movement during mitosis. Has microtubule depolymerization activity. Plays a role in chromosome congression. This is Kinesin-like protein KIF2B (KIF2B) from Macaca fascicularis (Crab-eating macaque).